Here is a 274-residue protein sequence, read N- to C-terminus: Hematopoietically-expressed homeobox protein hhex (274 aa).

The homeobox DNA-binding region spans 139–198; that stretch reads RKGGQVRFSNDQTIELEKKFETQKYLSPPERKRLAKMLQLSERQVKTWFQNRRAKWRRLK. The segment at 197–274 is disordered; sequence LKQENPQGNK…GDKGFYNCAH (78 aa). Positions 237 to 248 are enriched in polar residues; sequence DEPTSSPTSQET. Acidic residues predominate over residues 249–263; sequence LDSEVSDDSDQEVDI.

In terms of tissue distribution, expressed in the most dorsoanterior endomesoderm of the blastula and gastrula embryo, and later is restricted to the forming liver diverticulum.

It is found in the nucleus. Functionally, recognizes the DNA sequence 5'-ATTAA-3'. Transcriptional repressor. Regulates the differentiation of both endothelial and blood cells. Probably plays a role in the proliferation of vascular endothelial cells during blood vessel development. Establishes anterior identity at two levels; acts early to enhance canonical wnt-signaling by repressing expression of tle4, and acts later to inhibit nodal-signaling by directly targeting nodal/nr1 and nodal2/nr2. May play a role in liver development. Induces heart development. The chain is Hematopoietically-expressed homeobox protein hhex from Xenopus tropicalis (Western clawed frog).